The chain runs to 592 residues: Probable auxin efflux carrier component 1c (592 aa).

Topologically, residues 1-6 are extracellular; sequence MITGAD. The chain crosses the membrane as a helical span at residues 7–27; it reads FYHVMTAMVPLYVAMILAYGS. Residues 28–38 lie on the Cytoplasmic side of the membrane; the sequence is VKWWRIFTPDQ. A helical transmembrane segment spans residues 39 to 59; that stretch reads CSGINRFVALFAVPLLSFHFI. Position 51 (V51) interacts with (indol-3-yl)acetate. Topologically, residues 60–70 are extracellular; that stretch reads STNNPYTMNLR. A helical transmembrane segment spans residues 71 to 91; sequence FIAADTLQKLIVLALLTLWSH. Over 92–100 the chain is Cytoplasmic; the sequence is LSRRGSLEW. The chain crosses the membrane as a helical span at residues 101-121; the sequence is TITLFSLSTLPNTLVMGIPLL. N112 and L114 together coordinate (indol-3-yl)acetate. Residues 122-131 are Extracellular-facing; it reads KGMYGEFSGS. A helical membrane pass occupies residues 132-152; that stretch reads LMVQIVVLQCIIWYTLMLFMF. Y145 serves as a coordination point for (indol-3-yl)acetate. At 153–452 the chain is on the cytoplasmic side; it reads EYRGARILIT…LIRNPNTYSS (300 aa). Disordered regions lie at residues 214 to 236 and 282 to 331; these read RSDV…SNLT and GATP…AKGE. Residues 224 to 236 show a composition bias toward polar residues; sequence GFSSTTPRPSNLT. Over residues 309 to 318 the composition is skewed to pro residues; that stretch reads APNPAMAAPP. Residues 453–473 form a helical membrane-spanning segment; sequence LIGLIWSLVCFRWNFEMPAII. At 474–476 the chain is on the extracellular side; it reads LKS. The chain crosses the membrane as a helical span at residues 477-497; it reads ISILSDAGLGMAMFSLGLFMA. Residues 498–511 are Cytoplasmic-facing; that stretch reads LQPRIIACGNKVAT. The chain crosses the membrane as a helical span at residues 512–532; the sequence is FAMAVRFLTGPAVMAAASIAV. Over 533-537 the chain is Extracellular; that stretch reads GLRGT. Residues 538-558 form a helical membrane-spanning segment; sequence LLHVAIVQAALPQGIVPFVFA. (indol-3-yl)acetate-binding residues include I552 and V553. Residues 559-571 are Cytoplasmic-facing; it reads KEYSVHPDILSTA. Residues 572–592 form a helical membrane-spanning segment; that stretch reads VIFGMLIALPITLVYYILLGL.

Belongs to the auxin efflux carrier (TC 2.A.69.1) family. In terms of assembly, homodimer. Expressed at low levels in roots and leaves. Expressed in roots, stem bases, stems, leaves and young panicles.

It localises to the membrane. May act as a component of the auxin efflux carrier. The polypeptide is Probable auxin efflux carrier component 1c (Oryza sativa subsp. japonica (Rice)).